Consider the following 1567-residue polypeptide: ABC multidrug transporter MDR1 (1567 aa).

Residues 1–11 (MASQPPQPPSG) are compositionally biased toward pro residues. The tract at residues 1–37 (MASQPPQPPSGQPDTQYEEYQSEVITETTNRPTPAAD) is disordered. Residues 22–32 (SEVITETTNRP) are compositionally biased toward polar residues. Residues Asn149, Asn157, and Asn356 are each glycosylated (N-linked (GlcNAc...) asparagine). Residues 167–432 (VQYQDTFLSP…FEEMGWYCPP (266 aa)) form the ABC transporter 1 domain. The next 6 membrane-spanning stretches (helical) occupy residues 543 to 563 (STIATNISQIMMALIIGSLFF), 571 to 591 (GFFAKGSVIFFAILLNGLMSI), 636 to 656 (IPIKFLLALVFNIIIYFLGGL), 661 to 681 (AKFFIFFLFTFITILTMSAIF), 691 to 711 (IPQALALAGVMILALVIYTGF), and 798 to 818 (LGILLGFLAFFYFVYLMVSEL). 3 N-linked (GlcNAc...) asparagine glycosylation sites follow: Asn819, Asn895, and Asn912. Residues 891 to 1134 (FTWRNVTYDI…LLNYFETHGA (244 aa)) form the ABC transporter 2 domain. 927–934 (GVSGAGKT) contributes to the ATP binding site. The segment at 1172–1202 (ESRHVQQELDRIQSETSKRNEGHGQSAEKEP) is disordered. A helical transmembrane segment spans residues 1231–1251 (IWGKLLLGLASALFIGFSFFL). A glycan (N-linked (GlcNAc...) asparagine) is linked at Asn1253. 5 helical membrane-spanning segments follow: residues 1257-1277 (AGLQNSLFSIFMLTTIFSSLV), 1305-1325 (VFLLANIIVEIPYQILLGIIA), 1345-1365 (ILLLYCVQFFIFASTFAQMII), 1372-1392 (ETAGGIATTMFGLMVTFNGVL), and 1498-1518 (GIGWAYIVFNIFATVALYYLI).

This sequence belongs to the ABC transporter superfamily. ABCG family. PDR (TC 3.A.1.205) subfamily.

Its subcellular location is the cell membrane. It catalyses the reaction voriconazole(in) + ATP + H2O = voriconazole(out) + ADP + phosphate + H(+). The catalysed reaction is fluconazole(in) + ATP + H2O = fluconazole(out) + ADP + phosphate + H(+). It carries out the reaction (R)-miconazole(in) + ATP + H2O = (R)-miconazole(out) + ADP + phosphate + H(+). The enzyme catalyses (S)-miconazole(in) + ATP + H2O = (S)-miconazole(out) + ADP + phosphate + H(+). Pleiotropic ABC efflux transporter that may be involved in the modulation susceptibility to a wide range of unrelated cytotoxic compounds, including ethidium bromide, ketoconazole, cycloheximide, fluconazole, griseofulvin, imazalil and itraconazole. The sequence is that of ABC multidrug transporter MDR1 from Trichophyton interdigitale (strain MR816).